Here is a 138-residue protein sequence, read N- to C-terminus: MRTLWIVAVWLMGVEGHLYQFENMIYQKTGKFAIIAYSNYGCYCGWGGKGKPQDATDRCCFVHDCCYGRVNGCDPKMGTYSYSFQNGDIVCGGDDPCLRAVCECDRVAANCFAENLKTYNKKYWLSSIIDCKEESEKC.

The signal sequence occupies residues 1–16 (MRTLWIVAVWLMGVEG). Cystine bridges form between C42–C131, C44–C60, C59–C111, C65–C138, C66–C104, C73–C97, and C91–C102. Ca(2+)-binding residues include Y43, G45, and G47. H63 is an active-site residue. D64 lines the Ca(2+) pocket. D105 is a catalytic residue.

It belongs to the phospholipase A2 family. Group II subfamily. Ca(2+) is required as a cofactor.

It localises to the secreted. The catalysed reaction is a 1,2-diacyl-sn-glycero-3-phosphocholine + H2O = a 1-acyl-sn-glycero-3-phosphocholine + a fatty acid + H(+). Functionally, PA2 catalyzes the calcium-dependent hydrolysis of the 2-acyl groups in 3-sn-phosphoglycerides. The chain is Phospholipase A2 EC3 from Echis coloratus (Carpet viper).